A 214-amino-acid chain; its full sequence is Probable GTP-binding protein EngB (214 aa).

Positions 31-214 (GPPEIAFAGR…LRAAILQTIA (184 aa)) constitute an EngB-type G domain. GTP is bound by residues 39-46 (GRSNVGKS), 66-70 (GRTQE), 93-96 (DMPG), 160-163 (TKSD), and 194-196 (TSS). Mg(2+) contacts are provided by serine 46 and threonine 68.

Belongs to the TRAFAC class TrmE-Era-EngA-EngB-Septin-like GTPase superfamily. EngB GTPase family. Requires Mg(2+) as cofactor.

Necessary for normal cell division and for the maintenance of normal septation. In Bartonella tribocorum (strain CIP 105476 / IBS 506), this protein is Probable GTP-binding protein EngB.